The following is a 111-amino-acid chain: UPF0060 membrane protein XCC2880 (111 aa).

A run of 4 helical transmembrane segments spans residues 8–28, 34–54, 62–82, and 91–111; these read LLLFVATAVAELVGCYLPYLW, SVWLLLPAALSLAVFVWLLTL, VYAAYGGVYIATALLWLWWVD, and LLGAGCCLLGMAIIMFSPRSG.

The protein belongs to the UPF0060 family.

It localises to the cell inner membrane. The polypeptide is UPF0060 membrane protein XCC2880 (Xanthomonas campestris pv. campestris (strain ATCC 33913 / DSM 3586 / NCPPB 528 / LMG 568 / P 25)).